We begin with the raw amino-acid sequence, 225 residues long: Uracil-DNA glycosylase (225 aa).

D65 acts as the Proton acceptor in catalysis.

Belongs to the uracil-DNA glycosylase (UDG) superfamily. UNG family.

It localises to the cytoplasm. It carries out the reaction Hydrolyzes single-stranded DNA or mismatched double-stranded DNA and polynucleotides, releasing free uracil.. In terms of biological role, excises uracil residues from the DNA which can arise as a result of misincorporation of dUMP residues by DNA polymerase or due to deamination of cytosine. The polypeptide is Uracil-DNA glycosylase (Bacillus cytotoxicus (strain DSM 22905 / CIP 110041 / 391-98 / NVH 391-98)).